Here is a 101-residue protein sequence, read N- to C-terminus: NAD(P)H-quinone oxidoreductase subunit 4L (101 aa).

3 consecutive transmembrane segments (helical) span residues L3–T23, V30–N50, and V64–I84.

It belongs to the complex I subunit 4L family. In terms of assembly, NDH-1 can be composed of about 15 different subunits; different subcomplexes with different compositions have been identified which probably have different functions.

It is found in the cellular thylakoid membrane. The enzyme catalyses a plastoquinone + NADH + (n+1) H(+)(in) = a plastoquinol + NAD(+) + n H(+)(out). It carries out the reaction a plastoquinone + NADPH + (n+1) H(+)(in) = a plastoquinol + NADP(+) + n H(+)(out). Its function is as follows. NDH-1 shuttles electrons from an unknown electron donor, via FMN and iron-sulfur (Fe-S) centers, to quinones in the respiratory and/or the photosynthetic chain. The immediate electron acceptor for the enzyme in this species is believed to be plastoquinone. Couples the redox reaction to proton translocation, and thus conserves the redox energy in a proton gradient. Cyanobacterial NDH-1 also plays a role in inorganic carbon-concentration. This chain is NAD(P)H-quinone oxidoreductase subunit 4L, found in Nostoc sp. (strain PCC 7120 / SAG 25.82 / UTEX 2576).